The sequence spans 664 residues: Prelamin-A/C (664 aa).

M1 bears the N-acetylmethionine mark. Residues 1–24 (METPSQRRATRSGAQASSTPLSPT) form a disordered region. A head region spans residues 1 to 33 (METPSQRRATRSGAQASSTPLSPTRITRLQEKE). The segment at 1 to 130 (METPSQRRAT…TKKEGDLMAA (130 aa)) is interaction with MLIP. Position 3 is a phosphothreonine (T3). Residue S5 is modified to Phosphoserine. T10 is subject to Phosphothreonine. Residues S12 and S18 each carry the phosphoserine modification. T19 carries the post-translational modification Phosphothreonine. S22 is modified (phosphoserine). The 357-residue stretch at 31-387 (EKEDLQELND…KLLEGEEERL (357 aa)) folds into the IF rod domain. An N6-acetyllysine; alternate modification is found at K32. At K32 the chain carries N6-succinyllysine; alternate. K32 is covalently cross-linked (Glycyl lysine isopeptide (Lys-Gly) (interchain with G-Cter in SUMO2); alternate). Residues 34 to 70 (DLQELNDRLAVYIDRVRSLETENAGLRLRITESEEVV) are coil 1A. S51, S66, and S71 each carry phosphoserine. The segment at 71-80 (SREVSGIKSA) is linker 1. N6-acetyllysine is present on residues K78 and K97. The coil 1B stretch occupies residues 81–218 (YEAELGDARK…NIYSEELRET (138 aa)). K97 is covalently cross-linked (Glycyl lysine isopeptide (Lys-Gly) (interchain with G-Cter in SUMO2)). S107 bears the Phosphoserine mark. N6-acetyllysine occurs at positions 108, 114, 123, 135, 144, and 155. K171 is modified (N6-acetyllysine; alternate). Residue K171 is modified to N6-succinyllysine; alternate. Residue K171 forms a Glycyl lysine isopeptide (Lys-Gly) (interchain with G-Cter in SUMO2); alternate linkage. 3 positions are modified to N6-acetyllysine: K180, K201, and K208. Residue K201 forms a Glycyl lysine isopeptide (Lys-Gly) (interchain with G-Cter in SUMO2); alternate linkage. K201 is covalently cross-linked (Glycyl lysine isopeptide (Lys-Gly) (interchain with G-Cter in SUMO); alternate). K208 participates in a covalent cross-link: Glycyl lysine isopeptide (Lys-Gly) (interchain with G-Cter in SUMO2). Position 212 is a phosphoserine (S212). Residues K219 and K233 each participate in a glycyl lysine isopeptide (Lys-Gly) (interchain with G-Cter in SUMO2) cross-link. Residues 219-242 (KRRHETRLVEIDNGKQREFESRLA) are linker 2. 4 positions are modified to N6-acetyllysine: K233, K260, K265, and K270. The segment at 243-383 (DALQDLRAQH…HAYRKLLEGE (141 aa)) is coil 2. K260 is covalently cross-linked (Glycyl lysine isopeptide (Lys-Gly) (interchain with G-Cter in SUMO2); alternate). K270 is covalently cross-linked (Glycyl lysine isopeptide (Lys-Gly) (interchain with G-Cter in SUMO2); alternate). Phosphoserine occurs at positions 277, 282, 301, and 307. A Glycyl lysine isopeptide (Lys-Gly) (interchain with G-Cter in SUMO2); alternate cross-link involves residue K311. An N6-acetyllysine mark is found at K311, K316, and K341. Residues K366 and K378 each participate in a glycyl lysine isopeptide (Lys-Gly) (interchain with G-Cter in SUMO2) cross-link. The interval 384–442 (EERLRLSPSPTSQRSRGRASSHSSQTQSGGSVTKKRKLESSESRSSFSQHARTSGRVAV) is disordered. A tail region spans residues 384–664 (EERLRLSPSP…TQSPQNCSIM (281 aa)). 9 positions are modified to phosphoserine: S390, S392, S395, S398, S403, S404, S406, S407, and S414. The span at 403 to 414 (SSHSSQTQSGGS) shows a compositional bias: low complexity. The residue at position 416 (T416) is a Phosphothreonine. K417 is modified (N6-acetyllysine). Residues K417 and K420 each participate in a glycyl lysine isopeptide (Lys-Gly) (interchain with G-Cter in SUMO2) cross-link. Residues 417–422 (KKRKLE) carry the Nuclear localization signal motif. A phosphoserine mark is found at S423, S426, S429, and S431. One can recognise an LTD domain in the interval 428–545 (SSFSQHARTS…EEVAMRKLVR (118 aa)). K450 participates in a covalent cross-link: Glycyl lysine isopeptide (Lys-Gly) (interchain with G-Cter in SUMO2); alternate. Residues K450 and K457 each carry the N6-acetyllysine modification. Phosphoserine is present on residues S458 and S463. Residues K470 and K486 each participate in a glycyl lysine isopeptide (Lys-Gly) (interchain with G-Cter in SUMO2) cross-link. An N6-acetyllysine modification is found at K486. Phosphothreonine occurs at positions 496 and 505. A phosphoserine mark is found at S533 and S546. A Phosphothreonine modification is found at T548. Residues 555 to 577 (DEDGDDLLHHHHGSHGSSSGDPA) are disordered. Phosphoserine occurs at positions 568 and 571. A Glycyl lysine isopeptide (Lys-Gly) (interchain with G-Cter in SUMO2); alternate cross-link involves residue K597. K597 participates in a covalent cross-link: Glycyl lysine isopeptide (Lys-Gly) (interchain with G-Cter in SUMO1); alternate. The interval 598–620 (ASASSSGAQVGGSISSGSSASSV) is disordered. S612, S613, S616, and S619 each carry phosphoserine. 2 O-linked (GlcNAc) serine glycosylation sites follow: S625 and S628. S628, S632, and S636 each carry phosphoserine. Positions 647 to 661 (LLGNSRPRTQSPQNC) are cleaved as a propeptide — removed in Lamin-A/C form. C661 is subject to Cysteine methyl ester. C661 carries S-farnesyl cysteine lipidation. The propeptide at 662 to 664 (SIM) is removed in Prelamin-A/C form and in Lamin-A/C form.

Belongs to the intermediate filament family. In terms of assembly, homodimer of lamin A and lamin C. Lamin dimers then assemble into dimeric head-to-tail polymers. Ultimately, two head-to-tail polymers assemble laterally into a protofilament with a uniformly shaped rod of 3.5 nm in diameter. Interacts with lamin-associated polypeptides IA, IB and TMPO-alpha, RB1 and with emerin. Interacts with SREBF1, SREBF2, SUN2 and TMEM43. Interacts with TMEM201. Proteolytically processed isoform A interacts with NARF. Interacts with SUN1. Interacts with MLIP. Interacts with DMPK; may regulate nuclear envelope stability. Interacts with SUV39H1; the interaction increases stability of SUV39H1. Interacts with SYNE2. Interacts with ITSN1 isoform 2. Interacts with IFFO1; enables the formation of an interior nucleoskeleton that is recruited to DNA double-strand breaks. As to quaternary structure, interacts with EMD. Interacts (via C-terminus) with LEMD2 (via N-terminus) (in vitro). Proteolytic cleavage of the C-terminal of 18 residues of prelamin-A/C results in the production of lamin-A/C. The prelamin-A/C maturation pathway includes farnesylation of CAAX motif by protein farnesyltransferase (FNTA and FNTB), removal of the last three amino acids (-AAX) by RCE1/FACE2 and/or ZMPSTE24, methylation of the C-terminal cysteine by ICMT and endoproteolytic removal of the last 15 C-terminal amino acids by ZMPSTE24. Proteolytic cleavage requires prior farnesylation and methylation, and absence of these blocks cleavage. Post-translationally, farnesylation of prelamin-A/C facilitates nuclear envelope targeting. In terms of processing, phosphorylation plays a key role in lamin organization, subcellular localization and nuclear envelope disintegration. Phosphorylation by CDK1 at Ser-22 and Ser-392 at the onset of mitosis drives lamin disassembly and nuclear envelope breakdown. Phosphorylation at Ser-22 and Ser-392 during interphase promotes localization to the nucleoplasm and regulates lamina assembly. Phosphorylation at Ser-22, Ser-392 and Ser-628 during interphase causes redistribution between the nucleus and the cytoplasm. Phosphorylation at Ser-22 by CDK1 regulates matrix stiffness. Phosphorylation status of Ser-22 determines its localization between double-strand break (DSB) sites and the nuclear matrix. Phosphorylated by ATR at Ser-282 in response to DNA damage, leading to lamin disassembly and nuclear envelope rupture. Phosphorylation also regulates stability in micronuclei arising from genome instability: phosphorylation at Ser-395 by ATR in response to genome instability and double-stranded DNA breaks primes LMNA for subsequent phosphorylation at Ser-392 by CDK1 and micronuclei envelope rupture. The rupture of micronuclear envelope triggers the cGAS-STING pathway thereby activating the type I interferon response and innate immunity. Acetylation by KAT8 is required for nuclear architecture. Post-translationally, sumoylation is necessary for the localization to the nuclear envelope.

The protein resides in the nucleus lamina. It is found in the nucleus envelope. Its subcellular location is the nucleus. The protein localises to the nucleoplasm. It localises to the nucleus matrix. Lamins are intermediate filament proteins that assemble into a filamentous meshwork, and which constitute the major components of the nuclear lamina, a fibrous layer on the nucleoplasmic side of the inner nuclear membrane. Lamins provide a framework for the nuclear envelope, bridging the nuclear envelope and chromatin, thereby playing an important role in nuclear assembly, chromatin organization, nuclear membrane and telomere dynamics. Lamin A and C also regulate matrix stiffness by conferring nuclear mechanical properties. The structural integrity of the lamina is strictly controlled by the cell cycle, as seen by the disintegration and formation of the nuclear envelope in prophase and telophase, respectively. Lamin A and C are present in equal amounts in the lamina of mammals. Also invoved in DNA repair: recruited by DNA repair proteins XRCC4 and IFFO1 to the DNA double-strand breaks (DSBs) to prevent chromosome translocation by immobilizing broken DNA ends. Required for normal development of peripheral nervous system and skeletal muscle and for muscle satellite cell proliferation. Required for osteoblastogenesis and bone formation. Also prevents fat infiltration of muscle and bone marrow, helping to maintain the volume and strength of skeletal muscle and bone. Required for cardiac homeostasis. Functionally, prelamin-A/C can accelerate smooth muscle cell senescence. It acts to disrupt mitosis and induce DNA damage in vascular smooth muscle cells (VSMCs), leading to mitotic failure, genomic instability, and premature senescence. This chain is Prelamin-A/C (LMNA), found in Sus scrofa (Pig).